The primary structure comprises 174 residues: Thiol-disulfide oxidoreductase ResA (174 aa).

The helical; Signal-anchor for type II membrane protein transmembrane segment at 11-30 threads the bilayer; the sequence is TVILLLLLAALGYTIYANFF. Positions 36-174 constitute a Thioredoxin domain; it reads VAVGSTAPDF…IKQHLESIKP (139 aa). Residues cysteine 74 and cysteine 77 are joined by a disulfide bond.

This sequence belongs to the thioredoxin family. ResA subfamily.

The protein localises to the cell membrane. It functions in the pathway protein modification; cytochrome c assembly. Thiol-disulfide oxidoreductase which is required in disulfide reduction during c-type cytochrome synthesis. May accept reducing equivalents from CcdA, leading to breakage of disulfide bonds in apocytochrome c; following this reduction heme can be covalently attached. The protein is Thiol-disulfide oxidoreductase ResA of Geobacillus thermodenitrificans (strain NG80-2).